We begin with the raw amino-acid sequence, 517 residues long: MQRSDPPRPLLEMRGISKTFPAVRALAGVSLTVHPGEVHSLMGENGAGKSTLMKILSGAYQADPGGEILIDGRPISIDGPLAAREAGVAVIYQELCLAPNLSVAENIHVGRELRRGNGRRGTIDRAAMARGCQDVLERLGADFGPNTLVGTLSIAEQQLVEIARAVHTRARILVMDEPTTPLSSRETDNLFRLIRQLRAEGLAIIYISHRMAEIYELSDRVSVLRDGAYVGTLERDALSAERLVGMMVGRDISGFYKKAHAPYDPGNLLLSVRDIADGARVRGCSLDLHAGEVLGIAGLVGAGRTELARLIFGAEPRVRGEVTLAGKAFAAHSPREAIDAGLVYLTEDRKRQGLFLDMSVRENINISVCGRDARLGALDLARGAQRARDAIAALSIRVPHANVNVGALSGGNQQKVLLSRLLETKPRVLILDEPTRGVDIGAKSEIYRIINELARAGVGVIVISSELPEIIGVADRVLVMREGRIAGELGGRTDAPITQEAIIALATGSRTEASAAH.

ABC transporter domains lie at 11-251 (LEMR…VGRD) and 263-507 (YDPG…ALAT). Residue 43 to 50 (GENGAGKS) coordinates ATP.

The protein belongs to the ABC transporter superfamily. Ribose importer (TC 3.A.1.2.1) family. As to quaternary structure, the complex is composed of an ATP-binding protein (RbsA), two transmembrane proteins (RbsC) and a solute-binding protein (RbsB).

It is found in the cell inner membrane. It carries out the reaction D-ribose(out) + ATP + H2O = D-ribose(in) + ADP + phosphate + H(+). In terms of biological role, part of the ABC transporter complex RbsABC involved in ribose import. Responsible for energy coupling to the transport system. The protein is Ribose import ATP-binding protein RbsA 2 of Burkholderia pseudomallei (strain 1710b).